The chain runs to 388 residues: S-adenosylmethionine synthase (388 aa).

ATP is bound at residue histidine 16. Aspartate 18 is a Mg(2+) binding site. Glutamate 44 contacts K(+). L-methionine contacts are provided by glutamate 57 and glutamine 100. The flexible loop stretch occupies residues 100–110; that stretch reads QSPEIAQGVDR. ATP-binding positions include 165–167, aspartate 240, 246–247, alanine 263, and lysine 267; these read DAK and RK. Aspartate 240 contacts L-methionine. Lysine 271 serves as a coordination point for L-methionine.

This sequence belongs to the AdoMet synthase family. Homotetramer; dimer of dimers. It depends on Mg(2+) as a cofactor. K(+) is required as a cofactor.

It localises to the cytoplasm. It carries out the reaction L-methionine + ATP + H2O = S-adenosyl-L-methionine + phosphate + diphosphate. Its pathway is amino-acid biosynthesis; S-adenosyl-L-methionine biosynthesis; S-adenosyl-L-methionine from L-methionine: step 1/1. Functionally, catalyzes the formation of S-adenosylmethionine (AdoMet) from methionine and ATP. The overall synthetic reaction is composed of two sequential steps, AdoMet formation and the subsequent tripolyphosphate hydrolysis which occurs prior to release of AdoMet from the enzyme. In Acinetobacter baylyi (strain ATCC 33305 / BD413 / ADP1), this protein is S-adenosylmethionine synthase.